The following is a 264-amino-acid chain: Protein ADMETOS (264 aa).

Paternally imprinted expression in the endosperm.

Product of a dosage-sensitive gene that contributes to the maintenance of paternally and maternally imprinted gene expression in the endosperm in order to balance parental contributions. Underlies postzygotic reproductive isolation by promoting triploid seed arrest in a genetic dosage-dependent manner, thus being a component of postzygotic interploidy hybridization barriers. The chain is Protein ADMETOS from Arabidopsis thaliana (Mouse-ear cress).